Consider the following 63-residue polypeptide: Cecropin-B (63 aa).

Positions 1-23 are cleaved as a signal peptide; that stretch reads MNFNKIFVFVALILAISLGNSEA. An Arginine amide modification is found at Arg-62.

The protein belongs to the cecropin family. In terms of tissue distribution, strongly expressed in larval, pupal and adult fat body and hemocytes after injection of bacteria. Maximal expression is seen in pupae.

It is found in the secreted. In terms of biological role, cecropins have lytic and antibacterial activity against several Gram-positive and Gram-negative bacteria. This chain is Cecropin-B (CecB), found in Drosophila melanogaster (Fruit fly).